The sequence spans 61 residues: Small ribosomal subunit protein uS14 (61 aa).

Residues C24, C27, C40, and C43 each contribute to the Zn(2+) site.

The protein belongs to the universal ribosomal protein uS14 family. Zinc-binding uS14 subfamily. In terms of assembly, part of the 30S ribosomal subunit. Contacts proteins S3 and S10. Zn(2+) is required as a cofactor.

Its function is as follows. Binds 16S rRNA, required for the assembly of 30S particles and may also be responsible for determining the conformation of the 16S rRNA at the A site. This is Small ribosomal subunit protein uS14 from Mycoplasmopsis agalactiae (strain NCTC 10123 / CIP 59.7 / PG2) (Mycoplasma agalactiae).